A 306-amino-acid chain; its full sequence is Serine/threonine-protein phosphatase PP2A-2 catalytic subunit (306 aa).

Residues Asp-54, His-56, Asp-82, and Asn-114 each coordinate Mn(2+). The Proton donor role is filled by His-115. The Mn(2+) site is built by His-164 and His-238. Leucine methyl ester is present on Leu-306.

It belongs to the PPP phosphatase family. PP-2A subfamily. PP2A consists of a common heterodimeric core enzyme, composed of a 36 kDa catalytic subunit (subunit C) and a 65 kDa constant regulatory subunit (subunit A), that associates with a variety of regulatory subunits such as subunits B (the R2/B/PR55/B55, R3/B''/PR72/PR130/PR59 and R5/B'/B56 families). Interacts with B'THETA. Interacts with HDA14. Interacts with SRK2E/OST1. Interacts with TAP46. Requires Mn(2+) as cofactor. Reversibly methyl esterified on Leu-306 by leucine carboxyl methyltransferase 1 (LCMT1) and pectin methylesterase 1 (PME1). Carboxyl methylation influences the affinity of the catalytic subunit for the different regulatory subunits, thereby modulating the PP2A holoenzyme's substrate specificity, enzyme activity and cellular localization. Post-translationally, phosphorylation of either threonine (by autophosphorylation-activated protein kinase) or tyrosine results in inactivation of the phosphatase. Auto-dephosphorylation has been suggested as a mechanism for reactivation. Expressed in root meristem, emerging lateral roots, leaf vasculature, stipules, guard cells, anthers and pollen grains.

It localises to the cytoplasm. Its subcellular location is the cytosol. The protein resides in the nucleus. The protein localises to the peroxisome. It carries out the reaction O-phospho-L-seryl-[protein] + H2O = L-seryl-[protein] + phosphate. The catalysed reaction is O-phospho-L-threonyl-[protein] + H2O = L-threonyl-[protein] + phosphate. Its function is as follows. Dephosphorylates and activates the actin-depolymerizing factor ADF1, which, in turn, regulates actin cytoskeleton remodeling and is involved in the blue light photoreceptor PHOT2-mediated chloroplast avoidance movements. Associates with the serine/threonine-protein phosphatase PP2A regulatory subunits A and B' to positively regulates beta-oxidation of fatty acids and protoauxins in peroxisomes by dephosphorylating peroxisomal beta-oxidation-related proteins. Acts as a negative regulator of abscisic acid (ABA) signaling. May regulate ABA-dependent gene expression. Involved in the light-dependent activation of nitrate reductase. The polypeptide is Serine/threonine-protein phosphatase PP2A-2 catalytic subunit (Arabidopsis thaliana (Mouse-ear cress)).